The primary structure comprises 253 residues: POU Class 2 homeobox-associating factor 3 (253 aa).

The 23-residue stretch at 5-27 (PKVYQGVRVKMTVKELLQQRRAH) folds into the OCA domain.

This sequence belongs to the POU2AF family. In terms of assembly, interacts with POU2F3 in a DNA-dependent manner; this interaction increases POU2F3 transactivation activity. As to expression, expressed in tuft cells.

It is found in the cytoplasm. It localises to the nucleus. Its function is as follows. Transcriptional coactivator that specifically associates with POU2F3. This complex drives the development of tuft cells, a rare a rare chemosensory cells that coordinate immune and neural functions within mucosal epithelial tissues. The polypeptide is POU Class 2 homeobox-associating factor 3 (Mus musculus (Mouse)).